The following is a 395-amino-acid chain: Pesticidal crystal protein Cry6Ba (395 aa).

Belongs to the cry6A endotoxin family.

In terms of biological role, endotoxin with nematicidal activity. The protein is Pesticidal crystal protein Cry6Ba (cry6Ba) of Bacillus thuringiensis.